The sequence spans 1185 residues: DNA-directed RNA polymerase subunit beta' (1185 aa).

The Zn(2+) site is built by C60, C62, C75, and C78. D449, D451, and D453 together coordinate Mg(2+). C774, C853, C860, and C863 together coordinate Zn(2+).

The protein belongs to the RNA polymerase beta' chain family. As to quaternary structure, the RNAP catalytic core consists of 2 alpha, 1 beta, 1 beta' and 1 omega subunit. When a sigma factor is associated with the core the holoenzyme is formed, which can initiate transcription. It depends on Mg(2+) as a cofactor. Zn(2+) is required as a cofactor.

The catalysed reaction is RNA(n) + a ribonucleoside 5'-triphosphate = RNA(n+1) + diphosphate. Its function is as follows. DNA-dependent RNA polymerase catalyzes the transcription of DNA into RNA using the four ribonucleoside triphosphates as substrates. The sequence is that of DNA-directed RNA polymerase subunit beta' from Desulforamulus reducens (strain ATCC BAA-1160 / DSM 100696 / MI-1) (Desulfotomaculum reducens).